Here is a 290-residue protein sequence, read N- to C-terminus: MRLPVLGKDTVRMRDPEGLQDKITRIQRGGQEKLQIISDFDMTLSRFSRNGERCPTCYNIIDNSNIISDEGRKKLKCLFDIYYPLEIDPKKSIEEKYPLMVEWWSKAHDLFYEQRIQKDRLAQVVKESQATLRDGYDLFFNSLYQREIPLFIFSAGIGDVLEEIIRQAGVFHPNTKVVSNYMDFDDNGILTGFKGDLIHTYNKNSSVLKDTEYFKEISHRTNILLLGDTLGDLTMADGVSTVENIIKIGFLNDKVEELTEQFLQSYDIVLLRDETLDVVNGILQFVTAKN.

Catalysis depends on Asp39, which acts as the Nucleophile. Mg(2+)-binding residues include Asp39 and Asp41. Asp41 acts as the Proton donor in catalysis. Residue Glu86 participates in CMP binding. A N(7)-methyl-GMP-binding site is contributed by Glu86. Substrate is bound by residues 154 to 155 and Lys203; that span reads SA. Residue Asp228 participates in Mg(2+) binding.

This sequence belongs to the pyrimidine 5'-nucleotidase family. Monomer.

It is found in the cytoplasm. It carries out the reaction N(7)-methyl-GMP + H2O = N(7)-methylguanosine + phosphate. The enzyme catalyses CMP + H2O = cytidine + phosphate. The catalysed reaction is a ribonucleoside 5'-phosphate + H2O = a ribonucleoside + phosphate. Specifically hydrolyzes 7-methylguanosine monophosphate (m(7)GMP) to 7-methylguanosine and inorganic phosphate. The specific activity for m(7)GMP may protect cells against undesired salvage of m(7)GMP and its incorporation into nucleic acids. Also has weak activity for CMP. UMP and purine nucleotides are poor substrates. The sequence is that of 7-methylguanosine phosphate-specific 5'-nucleotidase A (Nt5c3b-a) from Xenopus laevis (African clawed frog).